A 377-amino-acid chain; its full sequence is Succinyl-diaminopimelate desuccinylase (377 aa).

His-66 serves as a coordination point for Zn(2+). The active site involves Asp-68. Residue Asp-99 participates in Zn(2+) binding. Catalysis depends on Glu-133, which acts as the Proton acceptor. Residues Glu-134, Glu-163, and His-349 each contribute to the Zn(2+) site.

This sequence belongs to the peptidase M20A family. DapE subfamily. In terms of assembly, homodimer. Zn(2+) serves as cofactor. It depends on Co(2+) as a cofactor.

The enzyme catalyses N-succinyl-(2S,6S)-2,6-diaminopimelate + H2O = (2S,6S)-2,6-diaminopimelate + succinate. It participates in amino-acid biosynthesis; L-lysine biosynthesis via DAP pathway; LL-2,6-diaminopimelate from (S)-tetrahydrodipicolinate (succinylase route): step 3/3. Its function is as follows. Catalyzes the hydrolysis of N-succinyl-L,L-diaminopimelic acid (SDAP), forming succinate and LL-2,6-diaminopimelate (DAP), an intermediate involved in the bacterial biosynthesis of lysine and meso-diaminopimelic acid, an essential component of bacterial cell walls. This chain is Succinyl-diaminopimelate desuccinylase, found in Legionella pneumophila (strain Paris).